Reading from the N-terminus, the 236-residue chain is 2,3,4,5-tetrahydropyridine-2,6-dicarboxylate N-acetyltransferase (236 aa).

Belongs to the transferase hexapeptide repeat family. DapH subfamily.

The enzyme catalyses (S)-2,3,4,5-tetrahydrodipicolinate + acetyl-CoA + H2O = L-2-acetamido-6-oxoheptanedioate + CoA. Its pathway is amino-acid biosynthesis; L-lysine biosynthesis via DAP pathway; LL-2,6-diaminopimelate from (S)-tetrahydrodipicolinate (acetylase route): step 1/3. Its function is as follows. Catalyzes the transfer of an acetyl group from acetyl-CoA to tetrahydrodipicolinate. In Clostridium botulinum (strain Eklund 17B / Type B), this protein is 2,3,4,5-tetrahydropyridine-2,6-dicarboxylate N-acetyltransferase.